We begin with the raw amino-acid sequence, 92 residues long: MPRSLKKGPFIDLHLLKKVEKAVESGDKKPIRTWSRRSTIFPTMIGLTIAVHNGRQHVPVFVADEMVGHKLGEFAPTRTYRGHAADKKAKKR.

This sequence belongs to the universal ribosomal protein uS19 family.

In terms of biological role, protein S19 forms a complex with S13 that binds strongly to the 16S ribosomal RNA. The protein is Small ribosomal subunit protein uS19 of Sodalis glossinidius (strain morsitans).